A 189-amino-acid polypeptide reads, in one-letter code: dCTP deaminase (189 aa).

Residues 112 to 117, 136 to 138, Gln157, Tyr171, and Gln181 each bind dCTP; these read KSTYAR and TLE. Glu138 serves as the catalytic Proton donor/acceptor.

This sequence belongs to the dCTP deaminase family. In terms of assembly, homotrimer.

The catalysed reaction is dCTP + H2O + H(+) = dUTP + NH4(+). Its pathway is pyrimidine metabolism; dUMP biosynthesis; dUMP from dCTP (dUTP route): step 1/2. Its function is as follows. Catalyzes the deamination of dCTP to dUTP. In Burkholderia orbicola (strain MC0-3), this protein is dCTP deaminase.